A 265-amino-acid chain; its full sequence is Hydroxyethylthiazole kinase (265 aa).

Methionine 50 contacts substrate. Residues arginine 125 and threonine 171 each coordinate ATP. Glycine 198 contributes to the substrate binding site.

This sequence belongs to the Thz kinase family. The cofactor is Mg(2+).

The catalysed reaction is 5-(2-hydroxyethyl)-4-methylthiazole + ATP = 4-methyl-5-(2-phosphooxyethyl)-thiazole + ADP + H(+). The protein operates within cofactor biosynthesis; thiamine diphosphate biosynthesis; 4-methyl-5-(2-phosphoethyl)-thiazole from 5-(2-hydroxyethyl)-4-methylthiazole: step 1/1. Functionally, catalyzes the phosphorylation of the hydroxyl group of 4-methyl-5-beta-hydroxyethylthiazole (THZ). The polypeptide is Hydroxyethylthiazole kinase (Cronobacter sakazakii (strain ATCC BAA-894) (Enterobacter sakazakii)).